A 254-amino-acid polypeptide reads, in one-letter code: MEVAEAGVDGVAGRRQQEEASGAAPFGRSSSLIGAAGFDGALRELKDLRSQLHQTADCCEKAFLDTEKKKLILESTKGYICDAIVAVIDHLGTVSSKLEQQLQEKIEITQTEKKLNFLKQRLLTCEQYAITLKLLTVRGDNDAIQYHRRYLSQSTGGTKEENGANSRKDDVKFVEYNSPTIPGAILTFKPYDIQSTIGRERSVATTDSESPTTDAKSSFSFRAEDVPIVLAEHRKKANHGSNILSFIRKGRRHA.

The segment at 1-26 (MEVAEAGVDGVAGRRQQEEASGAAPF) is disordered.

This sequence belongs to the ABI family. As to quaternary structure, binds SCAR.

The protein localises to the cytoplasm. It is found in the cytoskeleton. Its function is as follows. Involved in regulation of actin and microtubule organization. Part of a WAVE complex that activates the Arp2/3 complex. This is Probable protein ABIL5 from Oryza sativa subsp. japonica (Rice).